A 162-amino-acid chain; its full sequence is N5-carboxyaminoimidazole ribonucleotide mutase (162 aa).

3 residues coordinate substrate: Ser-11, Asp-14, and Arg-41.

This sequence belongs to the AIR carboxylase family. Class I subfamily.

The enzyme catalyses 5-carboxyamino-1-(5-phospho-D-ribosyl)imidazole + H(+) = 5-amino-1-(5-phospho-D-ribosyl)imidazole-4-carboxylate. The protein operates within purine metabolism; IMP biosynthesis via de novo pathway; 5-amino-1-(5-phospho-D-ribosyl)imidazole-4-carboxylate from 5-amino-1-(5-phospho-D-ribosyl)imidazole (N5-CAIR route): step 2/2. Functionally, catalyzes the conversion of N5-carboxyaminoimidazole ribonucleotide (N5-CAIR) to 4-carboxy-5-aminoimidazole ribonucleotide (CAIR). The sequence is that of N5-carboxyaminoimidazole ribonucleotide mutase from Bacillus subtilis (strain 168).